A 351-amino-acid chain; its full sequence is Methylthioribose-1-phosphate isomerase (351 aa).

Substrate-binding positions include 51–53 (RGA), Arg94, and Gln199. Catalysis depends on Asp240, which acts as the Proton donor. 250-251 (NK) is a substrate binding site.

This sequence belongs to the EIF-2B alpha/beta/delta subunits family. MtnA subfamily. Homodimer.

The enzyme catalyses 5-(methylsulfanyl)-alpha-D-ribose 1-phosphate = 5-(methylsulfanyl)-D-ribulose 1-phosphate. Its pathway is amino-acid biosynthesis; L-methionine biosynthesis via salvage pathway; L-methionine from S-methyl-5-thio-alpha-D-ribose 1-phosphate: step 1/6. Its function is as follows. Catalyzes the interconversion of methylthioribose-1-phosphate (MTR-1-P) into methylthioribulose-1-phosphate (MTRu-1-P). The sequence is that of Methylthioribose-1-phosphate isomerase from Bacillus thuringiensis subsp. konkukian (strain 97-27).